The primary structure comprises 119 residues: Large ribosomal subunit protein bL19 (119 aa).

It belongs to the bacterial ribosomal protein bL19 family.

Functionally, this protein is located at the 30S-50S ribosomal subunit interface and may play a role in the structure and function of the aminoacyl-tRNA binding site. The protein is Large ribosomal subunit protein bL19 of Petrotoga mobilis (strain DSM 10674 / SJ95).